Here is a 429-residue protein sequence, read N- to C-terminus: Glutamyl-tRNA reductase (429 aa).

Substrate-binding positions include 56-59 (TCNR), S119, 124-126 (EPQ), and Q130. The Nucleophile role is filled by C57. 199 to 204 (GAGEMI) serves as a coordination point for NADP(+).

Belongs to the glutamyl-tRNA reductase family. As to quaternary structure, homodimer.

The catalysed reaction is (S)-4-amino-5-oxopentanoate + tRNA(Glu) + NADP(+) = L-glutamyl-tRNA(Glu) + NADPH + H(+). The protein operates within porphyrin-containing compound metabolism; protoporphyrin-IX biosynthesis; 5-aminolevulinate from L-glutamyl-tRNA(Glu): step 1/2. Catalyzes the NADPH-dependent reduction of glutamyl-tRNA(Glu) to glutamate 1-semialdehyde (GSA). The protein is Glutamyl-tRNA reductase of Herminiimonas arsenicoxydans.